We begin with the raw amino-acid sequence, 507 residues long: Maturase K (507 aa).

Belongs to the intron maturase 2 family. MatK subfamily.

The protein localises to the plastid. The protein resides in the chloroplast. Functionally, usually encoded in the trnK tRNA gene intron. Probably assists in splicing its own and other chloroplast group II introns. In Ranunculus repens (Creeping buttercup), this protein is Maturase K.